Reading from the N-terminus, the 317-residue chain is Probable RuBisCO transcriptional regulator (317 aa).

Residues 6–63 (FTLDQLRILRAILIQGSFKKAATSLYISQPAVSSHVHNIEKQLNIQLFDRSHRNAQLT) form the HTH lysR-type domain. A DNA-binding region (H-T-H motif) is located at residues 23-42 (FKKAATSLYISQPAVSSHVH).

It belongs to the LysR transcriptional regulatory family.

The protein localises to the plastid. The protein resides in the chloroplast. Its function is as follows. Trans-acting transcriptional regulator of RuBisCO genes (rbcL and rbcS) expression. This chain is Probable RuBisCO transcriptional regulator (rbcR), found in Cyanidium caldarium (Red alga).